A 340-amino-acid chain; its full sequence is 3-hydroxybenzoate synthase (340 aa).

Residues tyrosine 147, arginine 154, tyrosine 207, and arginine 220 each coordinate substrate. Glutamate 334 (proton acceptor) is an active-site residue.

Belongs to the FkbO/Hyg5 family. Trimer.

The enzyme catalyses chorismate = 3-hydroxybenzoate + pyruvate. Involved in the biosynthesis of BC325, a rapamycin analog containing a 3-hydroxybenzoate starter unit. Catalyzes the hydrolysis of chorismate via an intramolecular mechanism to yield 3-hydroxybenzoate (3HBA). This chain is 3-hydroxybenzoate synthase, found in Streptomyces hygroscopicus.